The chain runs to 546 residues: Chaperonin GroEL (546 aa).

ATP is bound by residues 30 to 33, lysine 51, 87 to 91, glycine 415, 479 to 481, and aspartate 495; these read TLGP, DGTTT, and NAA. The interval 526-546 is disordered; the sequence is KKDEPAMPAGGGMGGMGGMDF. The span at 534-546 shows a compositional bias: gly residues; sequence AGGGMGGMGGMDF.

The protein belongs to the chaperonin (HSP60) family. As to quaternary structure, forms a cylinder of 14 subunits composed of two heptameric rings stacked back-to-back. Interacts with the co-chaperonin GroES.

The protein resides in the cytoplasm. It catalyses the reaction ATP + H2O + a folded polypeptide = ADP + phosphate + an unfolded polypeptide.. Its function is as follows. Together with its co-chaperonin GroES, plays an essential role in assisting protein folding. The GroEL-GroES system forms a nano-cage that allows encapsulation of the non-native substrate proteins and provides a physical environment optimized to promote and accelerate protein folding. The chain is Chaperonin GroEL from Xanthomonas campestris pv. campestris (strain 8004).